Consider the following 169-residue polypeptide: Putative phosphoesterase SH1944 (169 aa).

H34 serves as the catalytic Proton donor. Short sequence motifs (HXTX) lie at residues 34 to 37 and 115 to 118; these read HITI and HFTI. H115 (proton acceptor) is an active-site residue.

Belongs to the 2H phosphoesterase superfamily. YjcG family.

This chain is Putative phosphoesterase SH1944, found in Staphylococcus haemolyticus (strain JCSC1435).